A 210-amino-acid polypeptide reads, in one-letter code: MGQVFLLMPVLLVSCFLSQGAAMENQRLFNIAVNRVQHLHLLAQKMFNDFEGTLLSDERRQLNKIFLLDFCNSDSIVSPIDKQETQKSSVLKLLRISFRLIESWEYPSQTLTISNSLMVRNSNQISEKLSDLKVGINLLIEGSQEGILSLDDNDSQHLPPYGNYYQNLGGDGNVRRNYELLACFKKDMHKVETYLTVAKCRKSLEANCTL.

The N-terminal stretch at 1 to 22 is a signal peptide; that stretch reads MGQVFLLMPVLLVSCFLSQGAA. His38 is a Zn(2+) binding site. Residues Cys71 and Cys183 are joined by a disulfide bond. Residue Glu192 coordinates Zn(2+). The cysteines at positions 200 and 208 are disulfide-linked.

It belongs to the somatotropin/prolactin family.

It localises to the secreted. Growth hormone plays an important role in growth control and is involved in the regulation of several anabolic processes. Implicated as an osmoregulatory substance important for seawater adaptation. The polypeptide is Somatotropin-2 (gh2) (Oncorhynchus nerka (Sockeye salmon)).